The chain runs to 1085 residues: Kinesin-like protein cut7 (1085 aa).

Residues 1-70 (MAPRVAPGGS…TDHALHDENE (70 aa)) are disordered. Residues 24–37 (PVSTPNSHFRSASN) show a composition bias toward polar residues. The region spanning 72 to 421 (NINVVVRVRG…LEYAARAKSI (350 aa)) is the Kinesin motor domain. Residue 159 to 166 (GQTGTGKT) coordinates ATP. Coiled-coil stretches lie at residues 436-604 (LIKD…WNLK), 715-740 (ISSE…LRSL), and 897-955 (LALA…DSIK). 2 consecutive repeats follow at residues 987–998 (DESLCNLETTIE) and 999–1010 (DTSLVKLETTGD). Thr-1011 carries the post-translational modification Phosphothreonine; by CDC2. The tract at residues 1049-1085 (YTSSNQTNEPDVYDKPSNSSRTSLLRSSRSAYSKMKR) is disordered. A compositionally biased stretch (low complexity) spans 1065–1078 (SNSSRTSLLRSSRS).

This sequence belongs to the TRAFAC class myosin-kinesin ATPase superfamily. Kinesin family. BimC subfamily.

The protein resides in the cytoplasm. The protein localises to the cytoskeleton. It localises to the microtubule organizing center. Its subcellular location is the spindle pole body. Could be a spindle pole body motor. On transition from G2 to M phase of the cell cycle, the spindle pole body duplicates; the daughter pole bodies seed microtubules which interdigitate to form a short spindle that elongates to span the nucleus at metaphase. Mutations at cut7 block spindle formation. This Schizosaccharomyces pombe (strain 972 / ATCC 24843) (Fission yeast) protein is Kinesin-like protein cut7 (cut7).